The sequence spans 230 residues: tRNA (cytidine-2'-O-)-methyltransferase TrmJ (230 aa).

Residues 79–81 (TSG), Gly115, Ile135, and 142–144 (PIM) each bind S-adenosyl-L-methionine.

This sequence belongs to the class IV-like SAM-binding methyltransferase superfamily. RNA methyltransferase TrmH family. As to quaternary structure, homodimer.

Its subcellular location is the cytoplasm. It carries out the reaction cytidine(32) in tRNA + S-adenosyl-L-methionine = 2'-O-methylcytidine(32) in tRNA + S-adenosyl-L-homocysteine + H(+). Catalyzes the formation of 2'O-methylated cytidine (Cm32) at position 32 in tRNA. This Methanocaldococcus jannaschii (strain ATCC 43067 / DSM 2661 / JAL-1 / JCM 10045 / NBRC 100440) (Methanococcus jannaschii) protein is tRNA (cytidine-2'-O-)-methyltransferase TrmJ.